A 338-amino-acid chain; its full sequence is DNA-directed RNA polymerase subunit alpha (338 aa).

An alpha N-terminal domain (alpha-NTD) region spans residues 1-234 (MIHKNWAELI…DQLSIFVNFD (234 aa)). An alpha C-terminal domain (alpha-CTD) region spans residues 250 to 338 (FNPLLLKKVD…DLAKKFEDAF (89 aa)).

This sequence belongs to the RNA polymerase alpha chain family. As to quaternary structure, homodimer. The RNAP catalytic core consists of 2 alpha, 1 beta, 1 beta' and 1 omega subunit. When a sigma factor is associated with the core the holoenzyme is formed, which can initiate transcription.

The enzyme catalyses RNA(n) + a ribonucleoside 5'-triphosphate = RNA(n+1) + diphosphate. Its function is as follows. DNA-dependent RNA polymerase catalyzes the transcription of DNA into RNA using the four ribonucleoside triphosphates as substrates. In Ruegeria pomeroyi (strain ATCC 700808 / DSM 15171 / DSS-3) (Silicibacter pomeroyi), this protein is DNA-directed RNA polymerase subunit alpha.